Here is a 332-residue protein sequence, read N- to C-terminus: Serpentine receptor class alpha-10 (332 aa).

Residues 1 to 26 are Extracellular-facing; it reads MTSSNISICATEDQMVLQTSLLLRVN. A helical transmembrane segment spans residues 27-47; it reads VILMTTVAIFTFVLTYRALFI. At 48-64 the chain is on the cytoplasmic side; the sequence is LKQRPIFHKSTKILLYT. A helical membrane pass occupies residues 65–85; sequence SLIFVNIHEIIFMVIQCVAFI. Residues 86–109 lie on the Extracellular side of the membrane; the sequence is RSFTLSDKPCEIMRTTLECRFKNH. Residues 110 to 132 traverse the membrane as a helical segment; sequence VLIFGIAGMNFNQFGLTVDRLLA. The Cytoplasmic segment spans residues 133 to 146; it reads TVIPQTYSHLGSFP. Residues 147 to 167 form a helical membrane-spanning segment; the sequence is GILISILVIGCSIAAPLIIAI. The Extracellular segment spans residues 168-191; it reads GDPYDDIVPNCFFFPQHSAPRANV. A helical transmembrane segment spans residues 192–212; that stretch reads FLIILSALVIASIFLNLIIIF. Over 213 to 239 the chain is Cytoplasmic; sequence ANKKLEKGTRYYVSQRYQKREALISTR. A helical membrane pass occupies residues 240 to 260; it reads IIVYIAASQFLGMVLYSTIVL. Residues 261-276 lie on the Extracellular side of the membrane; it reads TLRLHKSMIPVSMYHN. A helical membrane pass occupies residues 277-297; that stretch reads IVWWAYTVPFAAVALPALLIH. Residues 298–332 lie on the Cytoplasmic side of the membrane; sequence RINLVGSNRKRVINRITAKVETQEEHMKSLKELWG.

The protein belongs to the nematode receptor-like protein sra family.

The protein resides in the membrane. This Caenorhabditis briggsae protein is Serpentine receptor class alpha-10.